We begin with the raw amino-acid sequence, 200 residues long: Prolactin-2 (200 aa).

An N-terminal signal peptide occupies residues M1–A23. 2 cysteine pairs are disulfide-bonded: C64/C173 and C190/C200.

The protein belongs to the somatotropin/prolactin family.

It localises to the secreted. The chain is Prolactin-2 (prl2) from Oreochromis mossambicus (Mozambique tilapia).